Consider the following 216-residue polypeptide: Translation initiation factor 6 (216 aa).

It belongs to the eIF-6 family.

Binds to the 50S ribosomal subunit and prevents its association with the 30S ribosomal subunit to form the 70S initiation complex. This Thermoplasma acidophilum (strain ATCC 25905 / DSM 1728 / JCM 9062 / NBRC 15155 / AMRC-C165) protein is Translation initiation factor 6.